The sequence spans 462 residues: Peroxisomal membrane protein PEX31 (462 aa).

Over residues 1–19 (MSEINNENLEPTSSTVAES) the composition is skewed to polar residues. The segment at 1–26 (MSEINNENLEPTSSTVAESTESKNKH) is disordered. Residues 1-90 (MSEINNENLE…LSIITWSNDN (90 aa)) are Cytoplasmic-facing. A helical transmembrane segment spans residues 91 to 111 (VSANLLGIFLFTVCVLYFGFI). Topologically, residues 112–175 (TRYFGHLMIV…TILSAQDVRR (64 aa)) are peroxisomal. A helical membrane pass occupies residues 176–196 (LLFTIAFLSPVYIFLTVFVLS). The Cytoplasmic segment spans residues 197-462 (PNYLMLIGGL…ISDVSMSPSL (266 aa)). The segment at 406-425 (PTVEKATPNSHALKSEENNR) is disordered. At S432 the chain carries Phosphoserine. T435 carries the phosphothreonine modification.

It belongs to the PEX28-32 family. PEX30/31 subfamily.

It is found in the peroxisome membrane. This chain is Peroxisomal membrane protein PEX31 (PEX31), found in Saccharomyces cerevisiae (strain ATCC 204508 / S288c) (Baker's yeast).